We begin with the raw amino-acid sequence, 121 residues long: Large ribosomal subunit protein uL14c (121 aa).

As to quaternary structure, component of the chloroplast large ribosomal subunit (LSU). Mature 70S chloroplast ribosomes of higher plants consist of a small (30S) and a large (50S) subunit. The 30S small subunit contains 1 molecule of ribosomal RNA (16S rRNA) and 24 different proteins. The 50S large subunit contains 3 rRNA molecules (23S, 5S and 4.5S rRNA) and 33 different proteins.

The protein resides in the plastid. Its subcellular location is the chloroplast. Functionally, component of the chloroplast ribosome (chloro-ribosome), a dedicated translation machinery responsible for the synthesis of chloroplast genome-encoded proteins, including proteins of the transcription and translation machinery and components of the photosynthetic apparatus. In Spinacia oleracea (Spinach), this protein is Large ribosomal subunit protein uL14c.